We begin with the raw amino-acid sequence, 122 residues long: Ribonuclease P protein component (122 aa).

It belongs to the RnpA family. As to quaternary structure, consists of a catalytic RNA component (M1 or rnpB) and a protein subunit.

The enzyme catalyses Endonucleolytic cleavage of RNA, removing 5'-extranucleotides from tRNA precursor.. Its function is as follows. RNaseP catalyzes the removal of the 5'-leader sequence from pre-tRNA to produce the mature 5'-terminus. It can also cleave other RNA substrates such as 4.5S RNA. The protein component plays an auxiliary but essential role in vivo by binding to the 5'-leader sequence and broadening the substrate specificity of the ribozyme. The protein is Ribonuclease P protein component of Shouchella clausii (strain KSM-K16) (Alkalihalobacillus clausii).